The primary structure comprises 444 residues: Trigger factor (444 aa).

The 86-residue stretch at 165 to 250 (GDFAKFDFEG…LHEIQELKIP (86 aa)) folds into the PPIase FKBP-type domain.

It belongs to the FKBP-type PPIase family. Tig subfamily.

The protein localises to the cytoplasm. It catalyses the reaction [protein]-peptidylproline (omega=180) = [protein]-peptidylproline (omega=0). Involved in protein export. Acts as a chaperone by maintaining the newly synthesized protein in an open conformation. Functions as a peptidyl-prolyl cis-trans isomerase. The polypeptide is Trigger factor (Campylobacter jejuni subsp. jejuni serotype O:23/36 (strain 81-176)).